Reading from the N-terminus, the 337-residue chain is DNA-directed RNA polymerase subunit alpha (337 aa).

The segment at 1-233 is alpha N-terminal domain (alpha-NTD); that stretch reads MVREDVVGST…DLLIPFLHAE (233 aa). The interval 265 to 337 is alpha C-terminal domain (alpha-CTD); that stretch reads KGIPLTCIFI…FAINLLNKKL (73 aa).

It belongs to the RNA polymerase alpha chain family. In plastids the minimal PEP RNA polymerase catalytic core is composed of four subunits: alpha, beta, beta', and beta''. When a (nuclear-encoded) sigma factor is associated with the core the holoenzyme is formed, which can initiate transcription.

The protein localises to the plastid. Its subcellular location is the chloroplast. The enzyme catalyses RNA(n) + a ribonucleoside 5'-triphosphate = RNA(n+1) + diphosphate. Its function is as follows. DNA-dependent RNA polymerase catalyzes the transcription of DNA into RNA using the four ribonucleoside triphosphates as substrates. The chain is DNA-directed RNA polymerase subunit alpha from Phalaenopsis aphrodite subsp. formosana (Moth orchid).